The sequence spans 746 residues: NAD(P)H-quinone oxidoreductase subunit 5, chloroplastic (746 aa).

The next 16 helical transmembrane spans lie at 9–29 (WIIP…LLLF), 39–59 (IWTF…LYLS), 89–109 (IDPL…LVLI), 125–145 (FAYM…SNLI), 147–167 (VYFF…FWFT), 185–205 (GDFG…SFEF), 221–241 (VNFF…IAKS), 258–278 (TPIS…FLVA), 280–300 (LLPL…IGII), 327–347 (LGYM…FHLI), 354–374 (ALLF…VGYS), 396–416 (TAFL…CFWS), 425–445 (LLFS…TAFY), 547–567 (ILFP…IGIP), 608–628 (FSVS…KPFY), and 723–743 (YLFF…FFYF).

Belongs to the complex I subunit 5 family. As to quaternary structure, NDH is composed of at least 16 different subunits, 5 of which are encoded in the nucleus.

It is found in the plastid. It localises to the chloroplast thylakoid membrane. The catalysed reaction is a plastoquinone + NADH + (n+1) H(+)(in) = a plastoquinol + NAD(+) + n H(+)(out). The enzyme catalyses a plastoquinone + NADPH + (n+1) H(+)(in) = a plastoquinol + NADP(+) + n H(+)(out). Its function is as follows. NDH shuttles electrons from NAD(P)H:plastoquinone, via FMN and iron-sulfur (Fe-S) centers, to quinones in the photosynthetic chain and possibly in a chloroplast respiratory chain. The immediate electron acceptor for the enzyme in this species is believed to be plastoquinone. Couples the redox reaction to proton translocation, and thus conserves the redox energy in a proton gradient. The polypeptide is NAD(P)H-quinone oxidoreductase subunit 5, chloroplastic (ndhF) (Capsella bursa-pastoris (Shepherd's purse)).